Reading from the N-terminus, the 30-residue chain is GAIKDALKGAAKTVAVELLKKAQCKLEKTC.

Cys24 and Cys30 are joined by a disulfide.

In terms of tissue distribution, expressed by the skin glands.

The protein localises to the secreted. Has antibacterial activity against the Gram-positive bacterium S.aureus ATCC 25923 (MIC=18 uM) and the Gram-negative bacterium E.coli ATCC 25726 (MIC=18 uM). This chain is Brevinin-2PTa, found in Pulchrana picturata (Malaysian fire frog).